The following is a 671-amino-acid chain: Kinesin-like protein KIF2C (671 aa).

The globular stretch occupies residues Met-1–Ile-200. The interval Gln-37–Thr-58 is disordered. A Phosphoserine; by AURKB modification is found at Ser-41. Residues Ser-44–Pro-47 carry the Microtubule tip localization signal motif. Phosphoserine is present on residues Ser-55, Ser-57, Ser-61, Ser-112, Ser-121, Ser-133, and Ser-138. The segment at Ala-115–Ser-138 is disordered. Polar residues predominate over residues Ser-121 to Asn-132. Residues Glu-153–Glu-184 are negative regulator of microtubule-binding. Residues Arg-204–Leu-534 enclose the Kinesin motor domain. ATP is bound by residues Arg-210 and Gly-294–Thr-301. A Phosphoserine modification is found at Ser-465. Positions Glu-533–Glu-568 are disordered. The stretch at Glu-566–Gln-601 forms a coiled coil. Phosphoserine is present on Ser-576.

The protein belongs to the TRAFAC class myosin-kinesin ATPase superfamily. Kinesin family. MCAK/KIF2 subfamily. Interacts with CENPH. Interacts with MTUS2/TIP150; the interaction is direct. Interacts with MAPRE1; the interaction is direct, regulated by phosphorylation and is probably required for targeting to growing microtubule plus ends. Interacts with KIF18B at microtubule tips; this interaction increases the affinity of both partners for microtubule plus ends and is required for robust microtubule depolymerization. Phosphorylation by AURKA or AURKB strongly reduces KIF18B-binding. Post-translationally, phosphorylation by AURKB, regulates association with centromeres and kinetochores and the microtubule depolymerization activity. Ubiquitinated. In terms of tissue distribution, testis. Localized to the meiotically active cells of the seminiferous epithelia in the testis.

It localises to the cytoplasm. Its subcellular location is the cytoskeleton. The protein resides in the nucleus. It is found in the chromosome. The protein localises to the centromere. It localises to the kinetochore. Its function is as follows. In complex with KIF18B, constitutes the major microtubule plus-end depolymerizing activity in mitotic cells. Regulates the turnover of microtubules at the kinetochore and functions in chromosome segregation during mitosis. Plays a role in chromosome congression and is required for the lateral to end-on conversion of the chromosome-microtubule attachment. In Rattus norvegicus (Rat), this protein is Kinesin-like protein KIF2C (Kif2c).